The sequence spans 885 residues: METEPVSVQKVPAPPGSPCRQQDSALTPTPTMPPPEEPSEDYEHSQSPAEQAIQEEFQFLRCPSCQAQAKCPKLLPCLHTLCSGCLEAPGLQCPICKAPGQADANGEALDNVFFESLQRRLAVFRQIVDAQAACTRCKGLADFWCFECEQLICSKCFEAHQWYLKHEARPLADLRDNSVSSFLDSTRKSNIFCSNTNHRNPALTDIYCRGCAKPLCCTCALLDRNHSHLHCDIGEEIQQWHEELGTMTQTLEEQGRTFDSAHAQMCSAIGQLDHARADIEKQIRARVRQVVDYVQAQERELLEAVNDRYQRDYQEIAGQLSCLEAVLQRIRTSGALVKRMKLYASDQEVLDMHSFLRKALCSLRQEEPQNQKVQLLTRGFEEFKLCLQDFISCITQRINAAVASPEAASNQPEAASTHPVTTSTPEDLEQPKEVQSVQAQALELSKTQPVAMVKTVPGAHPVPVYAFSMQGPTYREEASQTVGSMKRKCSHEDCSRKIIKMESTEENEDRLATSSPEQSWPSTFKATSPPHLDGTSNPESTVPEKKILLPNNNHVTSDTGETEERVVVISSSEDSDTENLSSHELDDSSSESSSLQLEGPNSLKALDESLAEPHLEDRTLVFFDLKIDNETQKISQLAAVNRESKFRVLIQPEAFSVYSKAVSLEAGLRHFLSFLTTMHRPILACSRLWGPGLPIFFQTLSDINKLWEFQDTISGFLAVLPLIRERIPGASSFKLGNLAKTYLARNMSERSALASVLAMRDLCCLLEISPGLPLAQHIYSFSSLQCFASLQPLIQASVLPQSEARLLALHNVSFVELLNAYRTNRQEGLKKYVHYLSLQTTPLSSSASTQVAQFLQALSTHMEGLLEGHAPAGAEGKAESKGCLA.

A disordered region spans residues 1–48; it reads METEPVSVQKVPAPPGSPCRQQDSALTPTPTMPPPEEPSEDYEHSQSP. Ser-17 carries the post-translational modification Phosphoserine; by HIPK2. Residues Ser-45 and Ser-47 each carry the phosphoserine; by HIPK2 and MAPK1 modification. Residues Cys-62 and Cys-65 each contribute to the Zn(2+) site. Residues 62–97 form an RING-type zinc finger; sequence CPSCQAQAKCPKLLPCLHTLCSGCLEAPGLQCPICK. Residue Lys-70 forms a Glycyl lysine isopeptide (Lys-Gly) (interchain with G-Cter in SUMO); alternate linkage. Residue Lys-70 forms a Glycyl lysine isopeptide (Lys-Gly) (interchain with G-Cter in SUMO2); alternate linkage. Zn(2+)-binding residues include Cys-77, His-79, Cys-82, Cys-85, Cys-93, Cys-96, Cys-134, Cys-137, Cys-156, and His-160. B box-type zinc fingers lie at residues 129–171 and 188–239; these read DAQA…ARPL and KSNI…EIQQ. Lys-165 is covalently cross-linked (Glycyl lysine isopeptide (Lys-Gly) (interchain with G-Cter in SUMO); alternate). Residue Lys-165 forms a Glycyl lysine isopeptide (Lys-Gly) (interchain with G-Cter in SUMO2); alternate linkage. Zn(2+)-binding residues include Cys-193, His-198, Cys-219, and His-226. Residues 295 to 331 adopt a coiled-coil conformation; it reads QAQERELLEAVNDRYQRDYQEIAGQLSCLEAVLQRIR. Residue Lys-384 forms a Glycyl lysine isopeptide (Lys-Gly) (interchain with G-Cter in SUMO2); alternate linkage. Lys-384 is covalently cross-linked (Glycyl lysine isopeptide (Lys-Gly) (interchain with G-Cter in ubiquitin); alternate). The residue at position 404 (Ser-404) is a Phosphoserine. The segment at 404–434 is disordered; it reads SPEAASNQPEAASTHPVTTSTPEDLEQPKEV. The segment covering 407–425 has biased composition (polar residues); it reads AASNQPEAASTHPVTTSTP. Residues 458–565 are interaction with PER2; the sequence is GAHPVPVYAF…TSDTGETEER (108 aa). Lys-486 is covalently cross-linked (Glycyl lysine isopeptide (Lys-Gly) (interchain with G-Cter in SUMO2); alternate). Residue Lys-486 forms a Glycyl lysine isopeptide (Lys-Gly) (interchain with G-Cter in ubiquitin); alternate linkage. Positions 486 to 500 match the Nuclear localization signal motif; the sequence is KRKCSHEDCSRKIIK. Residue Lys-488 forms a Glycyl lysine isopeptide (Lys-Gly) (interchain with G-Cter in SUMO2) linkage. Residues Lys-497 and Lys-500 each participate in a glycyl lysine isopeptide (Lys-Gly) (interchain with G-Cter in SUMO2); alternate cross-link. Lys-497 bears the N6-acetyllysine; alternate mark. Lys-500 participates in a covalent cross-link: Glycyl lysine isopeptide (Lys-Gly) (interchain with G-Cter in SUMO); alternate. Positions 500–599 are disordered; that stretch reads KMESTEENED…SESSSLQLEG (100 aa). Ser-503 and Ser-514 each carry phosphoserine. A compositionally biased stretch (polar residues) spans 512 to 526; it reads ATSSPEQSWPSTFKA. Ser-515 carries the post-translational modification Phosphoserine; by MAPK1. Position 522 is a phosphoserine (Ser-522). Residue Lys-525 is modified to N6-acetyllysine. Ser-528 is subject to Phosphoserine; by CDK1 and CDK2. At Thr-535 the chain carries Phosphothreonine. Phosphoserine is present on Ser-536. The residue at position 540 (Ser-540) is a Phosphoserine; by MAPK1. The span at 550–559 shows a compositional bias: polar residues; that stretch reads PNNNHVTSDT. Residues 566–572 form a sumo interaction motif (SIM) region; that stretch reads VVVISSS. Ser-575 carries the post-translational modification Phosphoserine; by CK2. Position 609 is a phosphoserine (Ser-609).

Key component of PML bodies. PML bodies are formed by the interaction of PML homodimers (via SUMO-binding motif) with sumoylated PML, leading to the assembly of higher oligomers. Several types of PML bodies have been observed. PML bodies can form hollow spheres that can sequester target proteins inside. Interacts (via SUMO-binding motif) with sumoylated proteins. Interacts (via C-terminus) with p53/TP53. Recruits p53/TP53 and CHEK2 into PML bodies, which promotes p53/TP53 phosphorylation at 'Ser-20' and prevents its proteasomal degradation. Interacts with MDM2, and sequesters MDM2 in the nucleolus, thereby preventing ubiquitination of p53/TP53. Interaction with PML-RARA oncoprotein and certain viral proteins causes disassembly of PML bodies and abolishes the normal PML function. Interacts with TERT, SIRT1, TOPBP1, TRIM27 and TRIM69. Interacts with ELF4 (via C-terminus). Interacts with Lassa virus Z protein and rabies virus phosphoprotein. Interacts (in the cytoplasm) with TGFBR1, TGFBR2 and PKM. Interacts (via the coiled-coil domain and when sumoylated) with SATB1. Interacts with UBE2I; the interaction is enhanced by arsenic binding. Interacts with SMAD2, SMAD3, DAXX, RPL11, HIPK2 and MTOR. Interacts with ITPR3, PPP1A and RB1. Interacts with RNF4, NLRP3, MAGEA2, RBL2, PER2, E2F4 and MAPK7/BMK1. Interacts with CSNK2A1 and CSNK2A3. Interacts with ANKRD2; the interaction is direct. Interacts with PPARGC1A and KAT2A. Interacts (via SUMO-interacting motif) with sumoylated MORC3. Interacts with TRIM16. Interacts with PRDM1. Interacts (via RING-type zinc finger) with EIF4E; the interaction reduces EIF4E affinity for the 5' m7G cap of mRNA, thus reducing nuclear export of cyclin CCND1. Post-translationally, ubiquitinated; mediated by RNF4, RNF111, UHRF1, UBE3A/E6AP, BCR(KLHL20) E3 ubiquitin ligase complex, SIAH1 or SIAH2 and leading to subsequent proteasomal degradation. 'Lys-6'-, 'Lys-11'-, 'Lys-48'- and 'Lys-63'-linked polyubiquitination by RNF4 is polysumoylation-dependent. Ubiquitination by RNF111 is polysumoylation-dependent. Ubiquitination by BCR(KLHL20) E3 ubiquitin ligase complex requires CDK1/2-mediated phosphorylation at Ser-528 which in turn is recognized by prolyl-isopeptidase PIN1 and PIN1-catalyzed isomerization further potentiates PML interaction with KLHL20. In terms of processing, sumoylation regulates PML's: stability in response to extracellular or intracellular stimuli, transcription directly and indirectly, through sequestration of or dissociation of the transcription factors from PML-NBs, ability to regulate apoptosis and its anti-viral activities. It is also essential for: maintaining proper PML nuclear bodies (PML-NBs) structure and normal function, recruitment of components of PML-NBs, the turnover and retention of PML in PML-NBs and the integrity of PML-NBs. Undergoes 'Lys-11'-linked sumoylation. Sumoylation on all three sites (Lys-70, Lys-165 and Lys-500) is required for nuclear body formation. Sumoylation on Lys-165 is a prerequisite for sumoylation on Lys-70. Lys-70 and Lys-165 are sumoylated by PISA1 and PIAS2. PIAS1-mediated sumoylation of PML promotes its interaction with CSNK2A1/CK2 and phosphorylation at Ser-575 which in turn triggers its ubiquitin-mediated degradation. Sumoylation at Lys-500 by RANBP2 is essential for the proper assembly of PML-NBs. Desumoylated by SENP1, SENP2, SENP3, SENP5 and SENP6. Phosphorylation is a major regulatory mechanism that controls PML protein abundance and the number and size of PML nuclear bodies (PML-NBs). Phosphorylated in response to DNA damage, probably by ATR. HIPK2-mediated phosphorylation at Ser-17, Ser-45 and Ser-47 leads to increased accumulation of PML protein and its sumoylation and is required for the maximal pro-apoptotic activity of PML after DNA damage. MAPK1- mediated phosphorylations at Ser-404, Ser-515 and Ser-540 and CDK1/2-mediated phosphorylation at Ser-528 promote PIN1-dependent PML degradation. CK2-mediated phosphorylation at Ser-575 primes PML ubiquitination via an unidentified ubiquitin ligase. Post-translationally, acetylation at Lys-497 is essential for its nuclear localization. Deacetylated at Lys-497 by SIRT1 and this deacetylation promotes PML control of PER2 nuclear localization.

Its subcellular location is the nucleus. It localises to the nucleoplasm. It is found in the cytoplasm. The protein resides in the PML body. The protein localises to the nucleolus. Its subcellular location is the endoplasmic reticulum membrane. It localises to the early endosome membrane. In terms of biological role, functions via its association with PML-nuclear bodies (PML-NBs) in a wide range of important cellular processes, including tumor suppression, transcriptional regulation, apoptosis, senescence, DNA damage response, and viral defense mechanisms. Acts as the scaffold of PML-NBs allowing other proteins to shuttle in and out, a process which is regulated by SUMO-mediated modifications and interactions. Inhibits EIF4E-mediated mRNA nuclear export by reducing EIF4E affinity for the 5' 7-methylguanosine (m7G) cap of target mRNAs. Positively regulates p53/TP53 by acting at different levels (by promoting its acetylation and phosphorylation and by inhibiting its MDM2-dependent degradation). Regulates phosphorylation of ITPR3 and plays a role in the regulation of calcium homeostasis at the endoplasmic reticulum. Regulates RB1 phosphorylation and activity. Acts as both a negative regulator of PPARGC1A acetylation and a potent activator of PPAR signaling and fatty acid oxidation. Regulates translation of HIF1A by sequestering MTOR, and thereby plays a role in neoangiogenesis and tumor vascularization. Regulates PER2 nuclear localization and circadian function. Cytoplasmic PML is involved in the regulation of the TGF-beta signaling pathway. Required for normal development of the brain cortex during embryogenesis. Plays a role in granulopoiesis or monopoiesis of myeloid progenitor cells. May play a role regulating stem and progenitor cell fate in tissues as diverse as blood, brain and breast. Shows antiviral activity towards lymphocytic choriomeningitis virus (LCMV) and the vesicular stomatitis virus (VSV). This Mus musculus (Mouse) protein is Protein PML (Pml).